A 198-amino-acid polypeptide reads, in one-letter code: MSYYAFEGLIPVVHPDAFVHPSAVLIGDVIVGAGVYIGPLASLRGDYGRLILEAGSNLQDGCIMHGYCDTDTIVHENGHIGHGAILHGCVVGRDALVGMNSVIMDGAMIGEESIVAAMSFVKAGFQGEARQLLVGSPARVLRQVTDQELHWKRLNTKEYQDLAIRCRTGLSETKPLTQVEENRPRLKGTTDVKPKSAQ.

The segment at 179-198 (VEENRPRLKGTTDVKPKSAQ) is disordered. Positions 180–198 (EENRPRLKGTTDVKPKSAQ) are enriched in basic and acidic residues.

Belongs to the transferase hexapeptide repeat family.

It participates in amine and polyamine metabolism; carnitine metabolism. Its function is as follows. Overproduction of CaiE stimulates the activity of CaiB and CaiD. This Salmonella agona (strain SL483) protein is Carnitine operon protein CaiE.